A 125-amino-acid polypeptide reads, in one-letter code: Small ribosomal subunit protein bS6 (125 aa).

The protein belongs to the bacterial ribosomal protein bS6 family.

In terms of biological role, binds together with bS18 to 16S ribosomal RNA. This chain is Small ribosomal subunit protein bS6 (rpsF), found in Pasteurella multocida (strain Pm70).